The primary structure comprises 340 residues: MRFMGSPVISARNVWKIFGKDPVGYLKTLQPGRSFDDIRADGYIAGVRDVSLDVARGEMLVIMGLSGSGKSTLVRCFSRLHEITGGSIEVDGQIIGDLSEKDLIELRRNKMGMVFQSFGLLPHRTVLDNVAFPLEMRGQDRHTRRKRALEVIELVGLAGREDYFPRELSGGQQQRVGIARSLAIEPDIWFLDEPFSALDPLIRREMQDEFLRLQAMLGKTIVFITHDFDEALRLADRIAIMKDGAVEQCDTPDQIVMNPTTGYVAKFTEEIDKARVVHAGVLARAGVVGEGQPVEAGATVQQLARLLVNDSRDLIPVADKGQVIGALDRQGALDILLKAS.

An ABC transporter domain is found at 32–268 (GRSFDDIRAD…PTTGYVAKFT (237 aa)). 64-71 (GLSGSGKS) is an ATP binding site.

Belongs to the ABC transporter superfamily. As to quaternary structure, the complex is probably composed of two ATP-binding proteins (TmoW), two transmembrane proteins (TmoV) and a solute-binding protein (TmoX).

It is found in the cell inner membrane. The enzyme catalyses a quaternary ammonium(out) + ATP + H2O = a quaternary ammonium(in) + ADP + phosphate + H(+). Its function is as follows. Part of the ABC transporter complex TmoXWV involved in trimethylamine N-oxide (TMAO) import. Responsible for energy coupling to the transport system. Is specific for TMAO and essential for TMAO metabolism. The protein is Trimethylamine N-oxide transport system ATP-binding protein TmoW of Ruegeria pomeroyi (strain ATCC 700808 / DSM 15171 / DSS-3) (Silicibacter pomeroyi).